Here is a 460-residue protein sequence, read N- to C-terminus: Hydroxyproline dehydrogenase (460 aa).

Position 310 is an N6-acetyllysine (lysine 310).

It belongs to the proline oxidase family. FAD serves as cofactor.

It catalyses the reaction trans-4-hydroxy-L-proline + a quinone = (3R,5S)-1-pyrroline-3-hydroxy-5-carboxylate + a quinol + H(+). It carries out the reaction L-proline + a quinone = (S)-1-pyrroline-5-carboxylate + a quinol + H(+). With respect to regulation, hydroproxyproline dehydrogenase activity is inhibited by THFA,(1R,3R)3-OH-cyclopentane-COOH and 5-OH-1H-pyrazole-3-COOH. Dehydrogenase that converts trans-4-L-hydroxyproline to delta-1-pyrroline-3-hydroxy-5-carboxylate (Hyp) using ubiquinone-10 as the terminal electron acceptor. Can also use proline as a substrate but with a very much lower efficiency. Does not react with other diastereomers of Hyp: trans-4-D-hydroxyproline and cis-4-L-hydroxyproline. Ubiquininone analogs such as menadione, duroquinone and ubiquinone-1 react more efficiently than oxygen as the terminal electron acceptor during catalysis. In Homo sapiens (Human), this protein is Hydroxyproline dehydrogenase.